A 271-amino-acid chain; its full sequence is 60 kDa heat shock protein, mitochondrial (271 aa).

Phosphoserine occurs at positions 30 and 33. 50–54 serves as a coordination point for ATP; the sequence is DGTTT. Lysine 83 bears the N6-acetyllysine mark. Lysine 84, lysine 97, and lysine 112 each carry N6-acetyllysine; alternate. N6-succinyllysine; alternate occurs at positions 84, 97, and 112. Lysine 125 carries the post-translational modification N6-acetyllysine. Residue lysine 126 is modified to N6-acetyllysine; alternate. At lysine 126 the chain carries N6-succinyllysine; alternate. Lysine 145 is modified (N6-acetyllysine). Lysine 175 bears the N6-succinyllysine mark. Lysine 188 and lysine 237 each carry N6-acetyllysine. Residue glycine 257 coordinates ATP. Lysine 270 is modified (N6-acetyllysine).

It belongs to the chaperonin (HSP60) family. As to quaternary structure, homoheptamer arranged in a ring structure. The functional units of these chaperonins consist of heptameric rings of the large subunit Hsp60, which function as a back-to-back double ring. Interacts with 2 heptameric Hsp10 rings to form the symmetrical football complex. Interacts with HRAS. Interacts with ATAD3A. Interacts with ETFBKMT and EEF1AKMT3. Interacts with MFHAS1. As to expression, detected at higher levels in caput epididymal spermatazoa than in cauda epididymal spermatazoa (at protein level).

Its subcellular location is the mitochondrion matrix. The catalysed reaction is ATP + H2O + a folded polypeptide = ADP + phosphate + an unfolded polypeptide.. Chaperonin implicated in mitochondrial protein import and macromolecular assembly. Together with Hsp10, facilitates the correct folding of imported proteins. May also prevent misfolding and promote the refolding and proper assembly of unfolded polypeptides generated under stress conditions in the mitochondrial matrix. The functional units of these chaperonins consist of heptameric rings of the large subunit Hsp60, which function as a back-to-back double ring. In a cyclic reaction, Hsp60 ring complexes bind one unfolded substrate protein per ring, followed by the binding of ATP and association with 2 heptameric rings of the co-chaperonin Hsp10. This leads to sequestration of the substrate protein in the inner cavity of Hsp60 where, for a certain period of time, it can fold undisturbed by other cell components. Synchronous hydrolysis of ATP in all Hsp60 subunits results in the dissociation of the chaperonin rings and the release of ADP and the folded substrate protein. The protein is 60 kDa heat shock protein, mitochondrial of Mesocricetus auratus (Golden hamster).